The sequence spans 300 residues: Ribosomal RNA small subunit methyltransferase H (300 aa).

S-adenosyl-L-methionine is bound by residues 46 to 48 (GGH), D65, F92, D107, and Q114.

Belongs to the methyltransferase superfamily. RsmH family.

The protein resides in the cytoplasm. The enzyme catalyses cytidine(1402) in 16S rRNA + S-adenosyl-L-methionine = N(4)-methylcytidine(1402) in 16S rRNA + S-adenosyl-L-homocysteine + H(+). Functionally, specifically methylates the N4 position of cytidine in position 1402 (C1402) of 16S rRNA. The protein is Ribosomal RNA small subunit methyltransferase H of Prochlorococcus marinus subsp. pastoris (strain CCMP1986 / NIES-2087 / MED4).